The chain runs to 283 residues: Polyamine aminopropyltransferase (283 aa).

The 234-residue stretch at 5–238 (STWIDEYHKG…GIWSWTFASE (234 aa)) folds into the PABS domain. Glutamine 32 provides a ligand contact to S-methyl-5'-thioadenosine. Spermidine-binding residues include histidine 63 and aspartate 87. Residues glutamate 107 and 139-140 (DG) each bind S-methyl-5'-thioadenosine. Aspartate 158 functions as the Proton acceptor in the catalytic mechanism. 158–161 (DCSD) provides a ligand contact to spermidine.

This sequence belongs to the spermidine/spermine synthase family. As to quaternary structure, homodimer or homotetramer.

It is found in the cytoplasm. It carries out the reaction S-adenosyl 3-(methylsulfanyl)propylamine + putrescine = S-methyl-5'-thioadenosine + spermidine + H(+). The protein operates within amine and polyamine biosynthesis; spermidine biosynthesis; spermidine from putrescine: step 1/1. Catalyzes the irreversible transfer of a propylamine group from the amino donor S-adenosylmethioninamine (decarboxy-AdoMet) to putrescine (1,4-diaminobutane) to yield spermidine. In Prochlorococcus marinus (strain MIT 9312), this protein is Polyamine aminopropyltransferase.